A 270-amino-acid chain; its full sequence is tRNA pseudouridine synthase A (270 aa).

Aspartate 55 acts as the Nucleophile in catalysis. Substrate is bound at residue tyrosine 110.

The protein belongs to the tRNA pseudouridine synthase TruA family.

The enzyme catalyses uridine(38/39/40) in tRNA = pseudouridine(38/39/40) in tRNA. Formation of pseudouridine at positions 38, 39 and 40 in the anticodon stem and loop of transfer RNAs. This chain is tRNA pseudouridine synthase A, found in Methanoculleus marisnigri (strain ATCC 35101 / DSM 1498 / JR1).